Here is a 1272-residue protein sequence, read N- to C-terminus: Myosin-binding protein C, cardiac-type (1272 aa).

A disordered region spans residues 95-147; that stretch reads KEPEKSEPVAPAEASPAPAASELPAPPVESNQNPEVPPAETQPEEPVDPIGLF. Positions 102–117 are enriched in low complexity; it reads PVAPAEASPAPAASEL. The 116-residue stretch at 137 to 252 folds into the Ig-like C2-type 1 domain; sequence PEEPVDPIGL…NLIVNEAPVS (116 aa). Phosphoserine; by PKA and PKC is present on serine 265. At threonine 274 the chain carries Phosphothreonine; by PKA and PKC. Serine 300 bears the Phosphoserine; by PKA mark. Ig-like C2-type domains lie at 359-451, 452-542, 543-640, and 644-763; these read KKST…VKEP, PILI…VQEK, KLEV…FVPR, and PKIH…ADIT. 2 Fibronectin type-III domains span residues 772 to 868 and 870 to 965; these read PPEA…IAPP and EPTH…VQEI. In terms of domain architecture, Ig-like C2-type 6 spans 969–1057; it reads PKICVPRHLR…ENMTDTVAIT (89 aa). The 96-residue stretch at 1066–1161 folds into the Fibronectin type-III 3 domain; it reads PPQNIKLADV…TKNPAYIQKT (96 aa). Position 1169 is a phosphoserine; by PKC (serine 1169). An Ig-like C2-type 7 domain is found at 1179–1263; that stretch reads PKFTHPLVNR…VNERGEAEIE (85 aa).

The protein belongs to the immunoglobulin superfamily. MyBP family. Post-translationally, substrate for phosphorylation by PKA and PKC. Reversible phosphorylation appears to modulate contraction. As to expression, expressed specifically in cardiac muscle among adult tissues, but is also expressed transiently in the skeletal muscle at early developmental stages. Isoform Type I is found in embryonic skeletal muscle and isoform Type II is found in both embryonic skeletal and cardiac muscle.

Its function is as follows. Thick filament-associated protein located in the crossbridge region of vertebrate striated muscle A bands. In vitro it binds MHC, F-actin and native thin filaments, and modifies the activity of actin-activated myosin ATPase. It may modulate muscle contraction or may play a more structural role. May be involved in the early phase of myofibrillogenesis. The polypeptide is Myosin-binding protein C, cardiac-type (MYBPC3) (Gallus gallus (Chicken)).